Consider the following 436-residue polypeptide: Fibrinogen gamma chain (436 aa).

The signal sequence occupies residues 1–25 (MSWSLQPPSFLLCCLLLLFSPTGLA). N-linked (GlcNAc...) asparagine glycosylation is present at asparagine 77. The Fibrinogen C-terminal domain maps to 169 to 415 (QIHDTTGKDC…ETTMKIIPFN (247 aa)). Cysteine 178 and cysteine 207 are joined by a disulfide. Ca(2+) is bound by residues aspartate 343, aspartate 345, and glycine 349. An intrachain disulfide couples cysteine 351 to cysteine 364. Glutamine 423 participates in a covalent cross-link: Isoglutamyl lysine isopeptide (Gln-Lys) (interchain with K-431). Serine 430 carries the post-translational modification Phosphoserine. Lysine 431 is covalently cross-linked (Isoglutamyl lysine isopeptide (Lys-Gln) (interchain with Q-423)).

As to quaternary structure, heterohexamer; disulfide linked. Contains 2 sets of 3 non-identical chains (alpha, beta and gamma). The 2 heterotrimers are in head to head conformation with the N-termini in a small central domain. In terms of processing, conversion of fibrinogen to fibrin is triggered by thrombin, which cleaves fibrinopeptides A and B from alpha and beta chains, and thus exposes the N-terminal polymerization sites responsible for the formation of the soft clot. The soft clot is converted into the hard clot by factor XIIIA which catalyzes the epsilon-(gamma-glutamyl)lysine cross-linking between gamma chains (stronger) and between alpha chains (weaker) of different monomers.

The protein localises to the secreted. In terms of biological role, together with fibrinogen alpha (FGA) and fibrinogen beta (FGB), polymerizes to form an insoluble fibrin matrix. Fibrin has a major function in hemostasis as one of the primary components of blood clots. In addition, functions during the early stages of wound repair to stabilize the lesion and guide cell migration during re-epithelialization. Was originally thought to be essential for platelet aggregation, based on in vitro studies using anticoagulated blood. However, subsequent studies have shown that it is not absolutely required for thrombus formation in vivo. Enhances expression of SELP in activated platelets via an ITGB3-dependent pathway. Maternal fibrinogen is essential for successful pregnancy. Fibrin deposition is also associated with infection, where it protects against IFNG-mediated hemorrhage. May also facilitate the immune response via both innate and T-cell mediated pathways. This Mus musculus (Mouse) protein is Fibrinogen gamma chain (Fgg).